The following is an 801-amino-acid chain: Disks large homolog 4 (801 aa).

Residues 4-60 form the L27 domain; that stretch reads KREDTERALQAMEACQSAGDEGFRTRAERLLTIFQSDLFQALLDIQEFYELTVFENQ. PDZ domains follow at residues 153–240 and 248–335; these read EITL…LRHK and ELKL…AKTL. The tract at residues 339-373 is disordered; that stretch reads HHQDAYNPPDITSSYSPHMDMSDYPQALSPSSPRR. The PDZ 3 domain maps to 393–474; that stretch reads RVVIHRGSTG…TVTIITQYRP (82 aa). The 71-residue stretch at 507 to 577 folds into the SH3 domain; the sequence is KRSFFIRALF…PSKRRVERKE (71 aa). The region spanning 610 to 786 is the Guanylate kinase-like domain; it reads ARPVIILGPS…IYHHVKSVIE (177 aa).

Belongs to the MAGUK family. Ubiquitinated by MDM2 in response to NMDA receptor activation, leading to proteasome-mediated degradation of DLG4 which is required for AMPA receptor endocytosis. Post-translationally, palmitoylated. Palmitoylation is required for targeting to postsynaptic density, plasma membrane and synapses.

It localises to the cell membrane. The protein localises to the postsynaptic density. It is found in the synapse. Postsynaptic scaffolding protein that plays a critical role in synaptogenesis and synaptic plasticity by providing a platform for the postsynaptic clustering of crucial synaptic proteins. In Danio rerio (Zebrafish), this protein is Disks large homolog 4 (dlg4).